Here is a 422-residue protein sequence, read N- to C-terminus: MKKNTSKTTMRINKQDALCTPHSHDPRDLQNMLDGGEYAPFVSPPMLESNFIQVNRRGESIYLHNRANWVTVGICFSSSTHKIPNVMLLAHLTPGAQKDTETLFKSLLTSPPAEKLVLTRFLPLQFVTLSVHDAENMSLKVKLVSGRAYYLQLCTSAYKQDTLFSQWVALISLLNQEKAKVSKVSEVSSLSGITNSTDITGSMDVTDVTTFTAILTPYMYAGTGPEHVRDSIDFPEFTDITDITDVTDLPENEVPEVPDVRIVTEVIEVREATEVTDSSDITNCSGVTVVFENNDLIRAKQEEKEKLKNILKPGCLQDTKSKSELKESSKHVTISNITLTFEGKRYFQTTLTPVESEANTSKEMKDKTSEEKMPDFQSTALKAEESRSLRTESNTSVLSPHIKSPSNFLKLVPHLSAPFSRE.

Residues 353 to 404 (PVESEANTSKEMKDKTSEEKMPDFQSTALKAEESRSLRTESNTSVLSPHIKS) form a disordered region. Basic and acidic residues predominate over residues 360–374 (TSKEMKDKTSEEKMP).

Belongs to the GARIN family. Interacts with CALM1. Expressed in spermatozoa (at protein level).

Its subcellular location is the cell projection. The protein resides in the cilium. The protein localises to the flagellum. Seems to play a role in sperm motility. The chain is Golgi-associated RAB2 interactor protein 2 from Homo sapiens (Human).